The primary structure comprises 140 residues: HTH-type transcriptional regulator LysM (140 aa).

An HTH asnC-type domain is found at 4-67 (VDESDLKILE…ELENEIRAIV (64 aa)). A DNA-binding region (H-T-H motif) is located at residues 23 to 42 (YTSIAKELKISEAAVRKRIE).

Homotetramer.

The protein localises to the cytoplasm. It participates in amino-acid biosynthesis; L-lysine biosynthesis via AAA pathway [regulation]. In the absence or at low concentrations of lysine, activates the biosynthesis of this amino acid via the alpha-aminoadipate (AAA) pathway. The polypeptide is HTH-type transcriptional regulator LysM (lysM) (Sulfurisphaera tokodaii (strain DSM 16993 / JCM 10545 / NBRC 100140 / 7) (Sulfolobus tokodaii)).